We begin with the raw amino-acid sequence, 202 residues long: Endothelin-1 (202 aa).

The N-terminal stretch at 1–25 (MDYLPVLFSLLLVVFQGAPEAAVLG) is a signal peptide. Residues 26–50 (AELSTGPDSGGEKPAPSAPWRPRRS) constitute a propeptide that is removed on maturation. The segment at 28–48 (LSTGPDSGGEKPAPSAPWRPR) is disordered. 2 cysteine pairs are disulfide-bonded: cysteine 53/cysteine 67 and cysteine 55/cysteine 63. The propeptide occupies 74 to 202 (VNTPEHIVPY…EKKVTHNRTH (129 aa)). The endothelin-like stretch occupies residues 110-124 (CQCASQKDKKCWTFC).

This sequence belongs to the endothelin/sarafotoxin family.

It is found in the secreted. In terms of biological role, endothelins are endothelium-derived vasoconstrictor peptides. Probable ligand for G-protein coupled receptors EDNRA and EDNRB which activates PTK2B, BCAR1, BCAR3 and, GTPases RAP1 and RHOA cascade in glomerular mesangial cells. Also binds the DEAR/FBXW7-AS1 receptor. Promotes mesenteric arterial wall remodeling via activation of ROCK signaling and subsequent colocalization of NFATC3 with F-actin filaments. NFATC3 then translocates to the nucleus where it subsequently promotes the transcription of the smooth muscle hypertrophy and differentiation marker ACTA2. The polypeptide is Endothelin-1 (EDN1) (Felis catus (Cat)).